The sequence spans 263 residues: Triosephosphate isomerase (263 aa).

N10–K12 provides a ligand contact to substrate. The Electrophile role is filled by H104. Catalysis depends on E176, which acts as the Proton acceptor. Residues G182, S221, and G242–G243 contribute to the substrate site.

It belongs to the triosephosphate isomerase family. Homodimer.

Its subcellular location is the cytoplasm. The catalysed reaction is D-glyceraldehyde 3-phosphate = dihydroxyacetone phosphate. It functions in the pathway carbohydrate biosynthesis; gluconeogenesis. Its pathway is carbohydrate degradation; glycolysis; D-glyceraldehyde 3-phosphate from glycerone phosphate: step 1/1. Involved in the gluconeogenesis. Catalyzes stereospecifically the conversion of dihydroxyacetone phosphate (DHAP) to D-glyceraldehyde-3-phosphate (G3P). The polypeptide is Triosephosphate isomerase (Haemophilus influenzae (strain 86-028NP)).